A 158-amino-acid polypeptide reads, in one-letter code: MFRGIYETTIDAKGRTSLPAKFREVLVDVHGDDRFVITNSAPVDLGAGTFSSGLLIFPYAKWVEFEENFRSSKGLTSAQRNSIMRTIISPAVECCADKLGRLLIPPHLRKGAALERDILFVGVMDKIEVWSQAEREKVRIQDLKNFPSDSETVAELGL.

SpoVT-AbrB domains lie at 5–52 and 91–134; these read IYET…TFSS and AVEC…SQAE.

The protein belongs to the MraZ family. In terms of assembly, forms oligomers.

Its subcellular location is the cytoplasm. The protein localises to the nucleoid. The sequence is that of Transcriptional regulator MraZ from Geobacter sulfurreducens (strain ATCC 51573 / DSM 12127 / PCA).